The following is a 479-amino-acid chain: Outer membrane protein OprJ (479 aa).

Residues 1–19 form the signal peptide; sequence MRKPAFGVSALLIALTLGA. A lipid anchor (N-palmitoyl cysteine) is attached at Cys20. A lipid anchor (S-diacylglycerol cysteine) is attached at Cys20. The tract at residues 102-121 is disordered; that stretch reads LNAAATGNRQRQPADLSAGN.

This sequence belongs to the outer membrane factor (OMF) (TC 1.B.17) family.

The protein resides in the cell outer membrane. Its function is as follows. Channel-forming component of a multidrug resistance efflux pump. This chain is Outer membrane protein OprJ (oprJ), found in Pseudomonas aeruginosa (strain ATCC 15692 / DSM 22644 / CIP 104116 / JCM 14847 / LMG 12228 / 1C / PRS 101 / PAO1).